The following is a 690-amino-acid chain: Lipase 2 (690 aa).

A signal peptide spans 1–37 (MLRGQEERKYSIRKYSIGVVSVLAATMFVVSSHEAQA). Positions 38 to 295 (SEKTPTNAAV…ADAKKVRPLK (258 aa)) are excised as a propeptide. Positions 53-71 (NQPGEQGNAITSHQMQSGK) are enriched in polar residues. Residues 53 to 266 (NQPGEQGNAI…KPTDKNTDNK (214 aa)) are disordered. Residues 72–81 (QLDDMHKENG) show a composition bias toward basic and acidic residues. 3 stretches are compositionally biased toward polar residues: residues 93-114 (LQLSKYQSTQNSKTIRTQNDNQ), 124-171 (SKQS…QPSI), and 185-206 (PTSTTPPSNDKTAPKSTKAQDA). 2 stretches are compositionally biased toward basic and acidic residues: residues 225–237 (IDAKQDDTVRQSE) and 257–266 (KPTDKNTDNK). Ser-412 functions as the Nucleophile in the catalytic mechanism. Gly-579 contacts Ca(2+). The active-site Charge relay system is the Asp-603. Asp-644 contributes to the Ca(2+) binding site. His-645 serves as the catalytic Charge relay system. Ca(2+) contacts are provided by Asp-647, Asp-652, and Asp-655.

It belongs to the AB hydrolase superfamily. Lipase family.

The protein localises to the secreted. The enzyme catalyses a triacylglycerol + H2O = a diacylglycerol + a fatty acid + H(+). This is Lipase 2 (lip2) from Staphylococcus aureus (strain MSSA476).